A 138-amino-acid chain; its full sequence is Class I hydrophobin 3 (138 aa).

A signal peptide spans 1–16 (MRFFLAITALVAAVTA). Cystine bridges form between Cys-40–Cys-111, Cys-48–Cys-105, Cys-49–Cys-87, and Cys-112–Cys-130.

It belongs to the fungal hydrophobin family. In terms of assembly, self-assembles to form functional amyloid fibrils called rodlets. Self-assembly into fibrillar rodlets occurs spontaneously at hydrophobic:hydrophilic interfaces and the rodlets further associate laterally to form amphipathic monolayers.

The protein resides in the secreted. The protein localises to the cell wall. In terms of biological role, aerial growth, conidiation, and dispersal of filamentous fungi in the environment rely upon a capability of their secreting small amphipathic proteins called hydrophobins (HPBs) with low sequence identity. Class I can self-assemble into an outermost layer of rodlet bundles on aerial cell surfaces, conferring cellular hydrophobicity that supports fungal growth, development and dispersal; whereas Class II form highly ordered films at water-air interfaces through intermolecular interactions but contribute nothing to the rodlet structure. HYD3 is a class I hydrophobin that contributes to the formation of aerial hyphae and fruiting bodies. In Cordyceps militaris (Caterpillar fungus), this protein is Class I hydrophobin 3.